A 196-amino-acid polypeptide reads, in one-letter code: GTP cyclohydrolase-2 (196 aa).

49-53 (RVHSE) is a binding site for GTP. The Zn(2+) site is built by C54, C65, and C67. GTP is bound by residues Q70, 92–94 (EGR), and T114. The active-site Proton acceptor is D126. Catalysis depends on R128, which acts as the Nucleophile. GTP-binding residues include T149 and K154.

The protein belongs to the GTP cyclohydrolase II family. Homodimer. It depends on Zn(2+) as a cofactor.

It catalyses the reaction GTP + 4 H2O = 2,5-diamino-6-hydroxy-4-(5-phosphoribosylamino)-pyrimidine + formate + 2 phosphate + 3 H(+). Its pathway is cofactor biosynthesis; riboflavin biosynthesis; 5-amino-6-(D-ribitylamino)uracil from GTP: step 1/4. In terms of biological role, catalyzes the conversion of GTP to 2,5-diamino-6-ribosylamino-4(3H)-pyrimidinone 5'-phosphate (DARP), formate and pyrophosphate. The sequence is that of GTP cyclohydrolase-2 from Shigella dysenteriae serotype 1 (strain Sd197).